A 496-amino-acid polypeptide reads, in one-letter code: Lysosomal Pro-X carboxypeptidase (496 aa).

The signal sequence occupies residues 1-21; it reads MGRRALLLLLLSFLAPWATIA. A propeptide spanning residues 22–45 is cleaved from the precursor; it reads LRPALRALGSLHLPTNPTSLPAVA. Asparagine 47 and asparagine 101 each carry an N-linked (GlcNAc...) asparagine glycan. Serine 179 serves as the catalytic Charge relay system. The interval 194–334 is SKS domain; the sequence is HMVVGALAAS…QNIFQALNVY (141 aa). Cystine bridges form between cysteine 215-cysteine 372, cysteine 233-cysteine 310, cysteine 264-cysteine 343, and cysteine 364-cysteine 394. Residues asparagine 317, asparagine 336, and asparagine 345 are each glycosylated (N-linked (GlcNAc...) asparagine). The N-linked (GlcNAc...) asparagine glycan is linked to asparagine 415. Active-site charge relay system residues include aspartate 430 and histidine 455.

This sequence belongs to the peptidase S28 family. Homodimer. As to expression, highest levels in placenta, lung and liver. Also present in heart, brain, pancreas and kidney.

The protein resides in the lysosome. It catalyses the reaction Cleavage of a -Pro-|-Xaa bond to release a C-terminal amino acid.. In terms of biological role, cleaves C-terminal amino acids linked to proline in peptides such as angiotensin II, III and des-Arg9-bradykinin. This cleavage occurs at acidic pH, but enzymatic activity is retained with some substrates at neutral pH. This chain is Lysosomal Pro-X carboxypeptidase (PRCP), found in Homo sapiens (Human).